The chain runs to 348 residues: Nuclear receptor subfamily 1 group I member 3 (348 aa).

Positions 8–83 (PRSCMVCGDR…AGMKKEMILS (76 aa)) form a DNA-binding region, nuclear receptor. An NR C4-type zinc finger spans residues 11–31 (CMVCGDRATGYHFHALTCEGC). Thr-38 bears the Phosphothreonine; by PKC mark. Residues 47–71 (CPFAGNCKVNKAQRRHCPACRLQKC) form an NR C4-type zinc finger. Residues 109 to 348 (GQQELVQTLL…MMPLLQEICS (240 aa)) form the NR LBD domain.

The protein belongs to the nuclear hormone receptor family. NR1 subfamily. As to quaternary structure, heterodimer of NR1I3 and RXR. Interacts with PSMC4. Interacts with ECT2. Directly interacts with DNAJC7; this complex may also include HSP90. Interacts with CRY1. Interacts with CRY2 in a ligand-dependent manner. Post-translationally, phosphorylated at Thr-38 by PKC, dephosphorylation of Thr-38 is required for nuclear translocation and activation.

The protein resides in the nucleus. It localises to the cytoplasm. It is found in the cytoskeleton. In terms of biological role, binds and transactivates the retinoic acid response elements that control expression of the retinoic acid receptor beta 2 and alcohol dehydrogenase 3 genes. Transactivates both the phenobarbital responsive element module of the human CYP2B6 gene and the CYP3A4 xenobiotic response element. This Callorhinus ursinus (Northern fur seal) protein is Nuclear receptor subfamily 1 group I member 3 (NR1I3).